The sequence spans 190 residues: Elongation factor P-like protein (190 aa).

Belongs to the elongation factor P family.

The polypeptide is Elongation factor P-like protein (Proteus mirabilis (strain HI4320)).